The following is a 326-amino-acid chain: Apolipoprotein F (326 aa).

A signal peptide spans 1–35 (MTGLCGYSAPDMRGLRLIMIPVELLLCYLLLHPVD). Positions 36–164 (ATSYGKQTNV…EQQSTGRVGR (129 aa)) are excised as a propeptide. A glycan (N-linked (GlcNAc...) asparagine) is linked at asparagine 118. The O-linked (GalNAc...) threonine glycan is linked to threonine 274. Serine 323 carries the phosphoserine modification.

Belongs to the apolipoprotein F family. O-glycosylated with core 1 or possibly core 8 glycans. As to expression, expressed by the liver and secreted in plasma.

It localises to the secreted. Its function is as follows. Minor apolipoprotein that associates with LDL. Inhibits cholesteryl ester transfer protein (CETP) activity and appears to be an important regulator of cholesterol transport. Also associates to a lesser degree with VLDL, Apo-AI and Apo-AII. The polypeptide is Apolipoprotein F (APOF) (Homo sapiens (Human)).